The following is a 619-amino-acid chain: Dihydroxy-acid dehydratase (619 aa).

Asp-81 provides a ligand contact to Mg(2+). Cys-122 provides a ligand contact to [2Fe-2S] cluster. Positions 123 and 124 each coordinate Mg(2+). The residue at position 124 (Lys-124) is an N6-carboxylysine. Cys-198 is a binding site for [2Fe-2S] cluster. Glu-494 provides a ligand contact to Mg(2+). Residue Ser-520 is the Proton acceptor of the active site.

This sequence belongs to the IlvD/Edd family. As to quaternary structure, homodimer. [2Fe-2S] cluster serves as cofactor. Requires Mg(2+) as cofactor.

It catalyses the reaction (2R)-2,3-dihydroxy-3-methylbutanoate = 3-methyl-2-oxobutanoate + H2O. It carries out the reaction (2R,3R)-2,3-dihydroxy-3-methylpentanoate = (S)-3-methyl-2-oxopentanoate + H2O. The protein operates within amino-acid biosynthesis; L-isoleucine biosynthesis; L-isoleucine from 2-oxobutanoate: step 3/4. It participates in amino-acid biosynthesis; L-valine biosynthesis; L-valine from pyruvate: step 3/4. Functions in the biosynthesis of branched-chain amino acids. Catalyzes the dehydration of (2R,3R)-2,3-dihydroxy-3-methylpentanoate (2,3-dihydroxy-3-methylvalerate) into 2-oxo-3-methylpentanoate (2-oxo-3-methylvalerate) and of (2R)-2,3-dihydroxy-3-methylbutanoate (2,3-dihydroxyisovalerate) into 2-oxo-3-methylbutanoate (2-oxoisovalerate), the penultimate precursor to L-isoleucine and L-valine, respectively. In Neisseria meningitidis serogroup A / serotype 4A (strain DSM 15465 / Z2491), this protein is Dihydroxy-acid dehydratase.